Consider the following 154-residue polypeptide: Aspartate carbamoyltransferase regulatory chain (154 aa).

4 residues coordinate Zn(2+): cysteine 109, cysteine 114, cysteine 138, and cysteine 141.

It belongs to the PyrI family. Contains catalytic and regulatory chains. Zn(2+) serves as cofactor.

Involved in allosteric regulation of aspartate carbamoyltransferase. In Sodalis glossinidius (strain morsitans), this protein is Aspartate carbamoyltransferase regulatory chain.